The following is a 76-amino-acid chain: Acyl carrier protein (76 aa).

The Carrier domain occupies 1–76 (MSIEERVKKI…SAIDYVQNNQ (76 aa)). Ser36 is modified (O-(pantetheine 4'-phosphoryl)serine).

Belongs to the acyl carrier protein (ACP) family. 4'-phosphopantetheine is transferred from CoA to a specific serine of apo-ACP by AcpS. This modification is essential for activity because fatty acids are bound in thioester linkage to the sulfhydryl of the prosthetic group.

Its subcellular location is the cytoplasm. The protein operates within lipid metabolism; fatty acid biosynthesis. In terms of biological role, carrier of the growing fatty acid chain in fatty acid biosynthesis. This chain is Acyl carrier protein, found in Pasteurella multocida (strain Pm70).